The following is a 330-amino-acid chain: Aspartate--ammonia ligase (330 aa).

The protein belongs to the class-II aminoacyl-tRNA synthetase family. AsnA subfamily.

It is found in the cytoplasm. The catalysed reaction is L-aspartate + NH4(+) + ATP = L-asparagine + AMP + diphosphate + H(+). Its pathway is amino-acid biosynthesis; L-asparagine biosynthesis; L-asparagine from L-aspartate (ammonia route): step 1/1. The chain is Aspartate--ammonia ligase from Shigella dysenteriae serotype 1 (strain Sd197).